The primary structure comprises 504 residues: ATP synthase subunit alpha (504 aa).

Residue 169–176 coordinates ATP; sequence GDRQTGKT.

This sequence belongs to the ATPase alpha/beta chains family. In terms of assembly, F-type ATPases have 2 components, CF(1) - the catalytic core - and CF(0) - the membrane proton channel. CF(1) has five subunits: alpha(3), beta(3), gamma(1), delta(1), epsilon(1). CF(0) has three main subunits: a(1), b(2) and c(9-12). The alpha and beta chains form an alternating ring which encloses part of the gamma chain. CF(1) is attached to CF(0) by a central stalk formed by the gamma and epsilon chains, while a peripheral stalk is formed by the delta and b chains.

The protein localises to the cell membrane. It carries out the reaction ATP + H2O + 4 H(+)(in) = ADP + phosphate + 5 H(+)(out). Its function is as follows. Produces ATP from ADP in the presence of a proton gradient across the membrane. The alpha chain is a regulatory subunit. The chain is ATP synthase subunit alpha from Clostridium botulinum (strain Eklund 17B / Type B).